The primary structure comprises 183 residues: TATA-box-binding protein 1 (183 aa).

Repeat copies occupy residues 8–84 and 99–177.

Belongs to the TBP family.

General factor that plays a role in the activation of archaeal genes transcribed by RNA polymerase. Binds specifically to the TATA box promoter element which lies close to the position of transcription initiation. In Methanosarcina acetivorans (strain ATCC 35395 / DSM 2834 / JCM 12185 / C2A), this protein is TATA-box-binding protein 1.